We begin with the raw amino-acid sequence, 362 residues long: Heme A synthase (362 aa).

5 helical membrane passes run 10 to 30 (LAAIRIWLTVVAGLIALMVLV), 102 to 122 (VIGMVYLLPFLWFLWRGAVSG), 128 to 148 (LWLIFGLGALQGAVGWWMVAS), 159 to 179 (VRLATHLSLALLIFAAIVWTL), and 198 to 218 (AWGLVGVTFVQLYLGALVAGL). Histidine 262 lines the heme pocket. Helical transmembrane passes span 266–286 (AYTLFLLGAWHAFDVMRAGAG), 297–317 (LAAILVQAGLGIATLLMVVPI), and 318–338 (SLALLHQGTAIIVLTFAVLQA). Histidine 323 is a binding site for heme.

The protein belongs to the COX15/CtaA family. Type 2 subfamily. In terms of assembly, interacts with CtaB. Heme b is required as a cofactor.

It localises to the cell membrane. The enzyme catalyses Fe(II)-heme o + 2 A + H2O = Fe(II)-heme a + 2 AH2. The protein operates within porphyrin-containing compound metabolism; heme A biosynthesis; heme A from heme O: step 1/1. Catalyzes the conversion of heme O to heme A by two successive hydroxylations of the methyl group at C8. The first hydroxylation forms heme I, the second hydroxylation results in an unstable dihydroxymethyl group, which spontaneously dehydrates, resulting in the formyl group of heme A. The chain is Heme A synthase from Bradyrhizobium sp. (strain BTAi1 / ATCC BAA-1182).